Consider the following 422-residue polypeptide: Steroid hormone receptor ERR1 (422 aa).

The tract at residues 1 to 67 is disordered; sequence MSSQVVGIEP…GAGPGEQGGG (67 aa). 2 positions are modified to phosphoserine: S19 and S22. A compositionally biased stretch (gly residues) spans 58 to 67; that stretch reads GAGPGEQGGG. The nuclear receptor DNA-binding region spans 76-151; sequence KRLCLVCGDV…VGMLKEGVRL (76 aa). 2 NR C4-type zinc fingers span residues 79 to 99 and 115 to 134; these read CLVCGDVASGYHYGVASCEAC and CPASNECEITKRRRKACQAC. K129, K138, K160, and K162 each carry N6-acetyllysine; by PCAF/KAT2B. Residues K189 and K402 each participate in a glycyl lysine isopeptide (Lys-Gly) (interchain with G-Cter in SUMO2) cross-link. The 229-residue stretch at 192 to 420 folds into the NR LBD domain; it reads PVNALVSHLL…KLFLEMLEAM (229 aa).

The protein belongs to the nuclear hormone receptor family. NR3 subfamily. Binds DNA as a monomer or a homodimer. Interacts (via the AF2 domain) with coactivator PPARGC1A (via the L3 motif); the interaction greatly enhances transcriptional activity of genes involved in energy metabolism. Interacts with PIAS4; the interaction enhances sumoylation. Interacts with MAPK15; promotes re-localization of ESRRA to the cytoplasm through a XPO1-dependent mechanism then inhibits ESRRA transcriptional activity. Post-translationally, phosphorylation on Ser-19 enhances sumoylation on Lys-14 increasing repression of transcriptional activity. In terms of processing, sumoylated with SUMO2. Main site is Lys-14 which is enhanced by phosphorylation on Ser-19, cofactor activation, and by interaction with PIAS4. Sumoylation enhances repression of transcriptional activity, but has no effect on subcellular location nor on DNA binding. Reversibly acetylated. Acetylation by PCAF/KAT2 at Lys-129, Lys-138, Lys-160 and Lys-162 and PCAF/KAT2 decreases transcriptional activity probably by inhibiting DNA-binding activity; deacetylation involves SIRT1 and HDAC8 and increases DNA-binding.

The protein resides in the nucleus. Its subcellular location is the cytoplasm. Its function is as follows. Binds to an ERR-alpha response element (ERRE) containing a single consensus half-site, 5'-TNAAGGTCA-3'. Can bind to the medium-chain acyl coenzyme A dehydrogenase (MCAD) response element NRRE-1 and may act as an important regulator of MCAD promoter. May function as a modulator of the estrogen signaling pathway in the uterus. Induces the expression of PERM1 in the skeletal muscle. This Canis lupus familiaris (Dog) protein is Steroid hormone receptor ERR1 (ESRRA).